The sequence spans 340 residues: DnaJ homolog subfamily C member 22 (340 aa).

The TM2 domain occupies 1–50 (MGKSLLAAYGLWALGGPLGLYHIYLGRDSHALLWMLTLGGFGMGWMWDFW). The next 7 helical transmembrane spans lie at 5–25 (LLAA…HIYL), 30–50 (HALL…WDFW), 81–101 (FIGQ…GLSF), 105–125 (FHMV…ATVG), 135–155 (LIAA…MIPI), 186–206 (IGLV…LNTS), and 212–232 (VAGS…ISAL). Residues 278–340 (MACKVLGVNF…LMRLRKSKTL (63 aa)) form the J domain.

Its subcellular location is the membrane. Its function is as follows. May function as a co-chaperone. This Xenopus tropicalis (Western clawed frog) protein is DnaJ homolog subfamily C member 22 (dnajc22).